A 403-amino-acid chain; its full sequence is uncharacterized protein (403 aa).

A signal peptide spans 1–26 (MYKFKTNLFLVIYFIAIFSIESSISS). Topologically, residues 27 to 381 (FNTEINSNSN…DSDNSSFGIS (355 aa)) are extracellular. Residues Asn-58, Asn-90, Asn-93, Asn-124, Asn-137, Asn-371, and Asn-375 are each glycosylated (N-linked (GlcNAc...) asparagine). A helical transmembrane segment spans residues 382–402 (IQKYLNSFLNSFIIILIINII). A topological domain (cytoplasmic) is located at residue Ile-403.

It is found in the membrane. This is an uncharacterized protein from Dictyostelium discoideum (Social amoeba).